Reading from the N-terminus, the 702-residue chain is Polyribonucleotide nucleotidyltransferase (702 aa).

Positions 484 and 490 each coordinate Mg(2+). The KH domain occupies 551 to 610; it reads PHIESFKIAVEKIGALIGPGGKTVKSLSDQYRVTINTDSDGTVTVSGRDAQSVFDAKVAV. An S1 motif domain is found at 620 to 688; that stretch reads GRVYQGVVKR…RMGRLNLSYI (69 aa).

The protein belongs to the polyribonucleotide nucleotidyltransferase family. The cofactor is Mg(2+).

The protein resides in the cytoplasm. It carries out the reaction RNA(n+1) + phosphate = RNA(n) + a ribonucleoside 5'-diphosphate. Involved in mRNA degradation. Catalyzes the phosphorolysis of single-stranded polyribonucleotides processively in the 3'- to 5'-direction. This chain is Polyribonucleotide nucleotidyltransferase, found in Treponema pallidum (strain Nichols).